Consider the following 98-residue polypeptide: UPF0235 protein Mmc1_3654 (98 aa).

This sequence belongs to the UPF0235 family.

This Magnetococcus marinus (strain ATCC BAA-1437 / JCM 17883 / MC-1) protein is UPF0235 protein Mmc1_3654.